We begin with the raw amino-acid sequence, 296 residues long: 4-hydroxybenzoate octaprenyltransferase (296 aa).

The next 8 membrane-spanning stretches (helical) occupy residues 28 to 48, 52 to 72, 102 to 122, 146 to 166, 169 to 189, 219 to 239, 241 to 261, and 275 to 295; these read PIGI…AGKG, LINI…GCVI, ALVF…LTNA, YYPQ…AFTA, GDLP…TVGY, VIIL…GARF, LGGW…WEFW, and FLHN…DYAF.

The protein belongs to the UbiA prenyltransferase family. Mg(2+) serves as cofactor.

It is found in the cell inner membrane. It carries out the reaction all-trans-octaprenyl diphosphate + 4-hydroxybenzoate = 4-hydroxy-3-(all-trans-octaprenyl)benzoate + diphosphate. It participates in cofactor biosynthesis; ubiquinone biosynthesis. Functionally, catalyzes the prenylation of para-hydroxybenzoate (PHB) with an all-trans polyprenyl group. Mediates the second step in the final reaction sequence of ubiquinone-8 (UQ-8) biosynthesis, which is the condensation of the polyisoprenoid side chain with PHB, generating the first membrane-bound Q intermediate 3-octaprenyl-4-hydroxybenzoate. This chain is 4-hydroxybenzoate octaprenyltransferase, found in Pseudomonas fluorescens (strain SBW25).